The chain runs to 285 residues: SLAM family member 9 (285 aa).

The first 17 residues, 1–17, serve as a signal peptide directing secretion; the sequence is MGALLWSLLLLLQEAKG. The Extracellular segment spans residues 18–232; sequence FSGDDEDPEE…YPEKPSMLCL (215 aa). Positions 25–126 constitute an Ig-like V-type domain; sequence PEEVIGVLQE…SHITKSYHLR (102 aa). 6 N-linked (GlcNAc...) asparagine glycosylation sites follow: N37, N97, N141, N149, N175, and N206. Positions 134 to 213 constitute an Ig-like C2-type domain; the sequence is PHITVNSNIS…VSNISSRRIS (80 aa). An intrachain disulfide couples C154 to C198. A helical transmembrane segment spans residues 233–253; it reads LVKSLFLLLLLAILTVGLCLF. At 254–285 the chain is on the cytoplasmic side; it reads RAQKSYETPRVRKLKRNRIKLRKKGKSGPTPV.

The protein localises to the membrane. Functionally, may play a role in the immune response. The sequence is that of SLAM family member 9 (Slamf9) from Mus musculus (Mouse).